The following is a 143-amino-acid chain: UPF0251 protein Rru_A1194 (143 aa).

The disordered stretch occupies residues 100–143 (LDGSACPNRRQRRGPCARRGAAGALARQTGDEPPSSPTDNEKDD). Residues 116-126 (ARRGAAGALAR) are compositionally biased toward low complexity.

It belongs to the UPF0251 family.

This is UPF0251 protein Rru_A1194 from Rhodospirillum rubrum (strain ATCC 11170 / ATH 1.1.1 / DSM 467 / LMG 4362 / NCIMB 8255 / S1).